Here is a 128-residue protein sequence, read N- to C-terminus: Diacylglycerol kinase (128 aa).

E34 contributes to the a divalent metal cation binding site. Helical transmembrane passes span 35–55 (SAFR…SYLT) and 58–78 (FLEW…ELIN). Catalysis depends on E75, which acts as the Proton acceptor. Position 82 (E82) interacts with a divalent metal cation. Residues 108–128 (LIGLIFWAFIWGRYLLTLYFN) traverse the membrane as a helical segment.

This sequence belongs to the bacterial diacylglycerol kinase family. The cofactor is Mg(2+).

It localises to the cell inner membrane. The catalysed reaction is a 1,2-diacyl-sn-glycerol + ATP = a 1,2-diacyl-sn-glycero-3-phosphate + ADP + H(+). In terms of biological role, catalyzes the ATP-dependent phosphorylation of sn-l,2-diacylglycerol (DAG) to phosphatidic acid. Involved in the recycling of diacylglycerol produced as a by-product during membrane-derived oligosaccharide (MDO) biosynthesis. The protein is Diacylglycerol kinase (dgkA) of Helicobacter pylori (strain J99 / ATCC 700824) (Campylobacter pylori J99).